The sequence spans 528 residues: Calcium-dependent protein kinase 4 (528 aa).

The interval 1-36 (MGQEVSSVNNTKNEHHKTNKKSLKGGNERHEMKESS) is disordered. The N-myristoyl glycine moiety is linked to residue Gly-2. The segment covering 14-23 (EHHKTNKKSL) has biased composition (basic residues). Residues 71–329 (KGIKILGKGS…RDALEHEWIK (259 aa)) enclose the Protein kinase domain. ATP-binding positions include 76 to 84 (LGKGSFGEV) and Lys-99. Asp-193 serves as the catalytic Proton acceptor. Positions 350-358 (NIRQFQSTQ) match the J domain autoinhibitory motif motif. The interval 350 to 386 (NIRQFQSTQKLAQAALLYMGSKLTTIDETKELTKIFK) is j domain. The short motif at 359-368 (KLAQAALLYM) is the J domain EF-hand interaction motif element. EF-hand domains lie at 376–411 (DETK…LLKL), 427–458 (EVDQ…RKLL), 459–494 (LSTE…SDVS), and 496–528 (ECWK…LCNY). Residues Asp-389, Asn-391, Asp-393, Gln-395, Glu-400, Asp-436, Asp-438, Asn-440, Tyr-442, Glu-447, Asp-472, Asp-474, Ser-476, Lys-478, Glu-483, Asp-506, Asn-508, Asp-510, Glu-512, and Glu-517 each coordinate Ca(2+).

The protein belongs to the protein kinase superfamily. Ser/Thr protein kinase family. CDPK subfamily. As to quaternary structure, may interact with the pre-replication MCM complex prior male gametogenesis activation. Requires Mg(2+) as cofactor. Myristoylated; myristoylation may target it to different subcellular compartments. During male gametogenesis, myristoylation is required to initiate DNA replication but not for mitotic spindle assembly or axoneme activation. In terms of processing, not palmitoylated. Post-translationally, may be autophosphorylated on Thr-234 in vitro.

It localises to the cytoplasm. The protein resides in the cell membrane. The catalysed reaction is L-seryl-[protein] + ATP = O-phospho-L-seryl-[protein] + ADP + H(+). The enzyme catalyses L-threonyl-[protein] + ATP = O-phospho-L-threonyl-[protein] + ADP + H(+). With respect to regulation, activated by calcium. Upon calcium binding to the EF-hand domains, the C-terminus of the junction domain (J domain) undergoes a conformational change which results in the dissociation of the pseudo-substrate inhibitory motif from the catalytic domain. This, in turn, may facilitate the autophosphorylation of the activation loop at Thr-234, which leads to the kinase activation. Intracellular calcium increase is triggered by xanthurenic acid (XA), a small mosquito molecule that induces the differentiation of specialized transmission stages, the gametocytes, into male and female gametes. Activated by a decrease in temperature (20 degrees Celsius) and an increase in pH (7.6) occurring when the parasite is ingested by in the mosquito. Calcium-dependent protein kinase which acts as a sensor and effector of intracellular Ca(2+) levels probably in part downstream of cGMP-activated PKG kinase. Plays a central role in the host erythrocytes and hepatocytes infection cycles, sexual reproduction and mosquito transmission of the parasite. During the liver stage, involved in sporozoite motility and thus in sporozoite invasion of host hepatocytes, probably together with CDPK1 and CDPK5. Involved in merosome egress from host hepatocytes, probably together with CDPK5. During the asexual blood stage, involved in merozoite invasion of host erythrocytes and motility by stabilizing the inner membrane complex, a structure below the plasma membrane which acts as an anchor for the glidosome, an acto-myosin motor. Required for cell cycle progression in the male gametocyte. During male gametogenesis in the mosquito gut, required to initiate the first round of DNA replication, probably by facilitating the assembly of the pre-replicative MCM complex, to assemble the first mitotic spindle and, at the end of gametogenesis, to initiate axoneme motility, cytokinesis and subsequent exflagellation. For each of these steps, may phosphorylate SOC1, SOC2 and SOC3, respectively. Together with CDPK1, regulates ookinete gliding in the mosquito host midgut. The polypeptide is Calcium-dependent protein kinase 4 (Plasmodium falciparum (isolate 3D7)).